The following is a 222-amino-acid chain: Uclacyanin-3 (222 aa).

The signal sequence occupies residues 1 to 21 (MGSTVAAALLLFLAAVPAVFA). The Phytocyanin domain occupies 22-120 (ATFKVGDISG…GMKLAVPVLA (99 aa)). Cu cation is bound by residues His61, Cys102, His107, and Met112. Cys74 and Cys108 are disulfide-bonded. Residues 121–198 (AAPSPSTPSS…APLPPSLSPN (78 aa)) are disordered. Composition is skewed to pro residues over residues 125–172 (PSTP…PSAS) and 185–195 (TPPPAPLPPSL). Asn198 carries the GPI-anchor amidated asparagine lipid modification. Residues 199 to 222 (AASKGVMSYGIIGVTMILMYAVMT) constitute a propeptide, removed in mature form.

It is found in the cell membrane. Functionally, probably acts as an electron carrier involved in oxygen activation and/or lignin formation. This chain is Uclacyanin-3 (UCC3), found in Arabidopsis thaliana (Mouse-ear cress).